The primary structure comprises 456 residues: UDP-N-acetylmuramoylalanine--D-glutamate ligase (456 aa).

Residue 121–127 (GTNGKTT) coordinates ATP.

The protein belongs to the MurCDEF family.

The protein resides in the cytoplasm. The enzyme catalyses UDP-N-acetyl-alpha-D-muramoyl-L-alanine + D-glutamate + ATP = UDP-N-acetyl-alpha-D-muramoyl-L-alanyl-D-glutamate + ADP + phosphate + H(+). It functions in the pathway cell wall biogenesis; peptidoglycan biosynthesis. Cell wall formation. Catalyzes the addition of glutamate to the nucleotide precursor UDP-N-acetylmuramoyl-L-alanine (UMA). The chain is UDP-N-acetylmuramoylalanine--D-glutamate ligase from Desulfotalea psychrophila (strain LSv54 / DSM 12343).